A 649-amino-acid polypeptide reads, in one-letter code: MASVSALTEELDSITSELHAVEIQIQELTERQEELIQKKKVLTKKIKQCLEDSDAGASNEYDSSPAAWNKEDFPWSGKVKDVLQNVFKLQKFRPLQLETINVTMAGKEVFLVMPTGGGKGLCYQLPALCSDGFTLVICPLISLMEDQLMVLKQLGISATMLNASSSKEHVKWVHAEMVNKNSELKLIYVTPEKIAKSKMFMSRLEKAYEARRFTRIAVDEVHCCSQWGHDFRPDYKALGILKRQFPNASLIGLTATATNHVLTDAQKILCIEKCFTFTASFNRPNLYYEVRQKPSNTEDFIEDIVKLINGRYKGQSGIIYCFSQKDSEQVTVSLRNLGIHAGAYHANLEPEDKTTVHRKWSANEIQVVVATVAFGMGIDKPDVRFVIHHSMSKSMENYYQESGRAGRDDMKADCILYYGFGDIFRISSMVVMENVGQQKLYEMVSYCQNISKCRRLLMAQHFDEVWNSEACNKMCDNCCKDSAFERKNITEYCRDLIKILKQAEELNEKLTPLKLIDSWMGKGAAKLRVAGVVAPTLPREDLEKIIAHFLIQQYLKEDYSFTAYATISYLKIGPKANLLNNEAHAITMQVTKSTQNSFRVESSQTCHSEQGDKKMEEKNSGNFQKKAANMLQQSGSKNTGAKKRKIDDA.

The 176-residue stretch at 100–275 folds into the Helicase ATP-binding domain; it reads INVTMAGKEV…QKILCIEKCF (176 aa). Residue 113–120 coordinates ATP; it reads MPTGGGKG. Positions 219–222 match the DEVH box motif; it reads DEVH. Positions 300–451 constitute a Helicase C-terminal domain; sequence FIEDIVKLIN…EMVSYCQNIS (152 aa). Residues C453, C471, C475, and C478 each coordinate Zn(2+). 2 positions are modified to N6-acetyllysine: K514 and K522. S597 and S602 each carry phosphoserine. The span at 597–608 shows a compositional bias: polar residues; that stretch reads SFRVESSQTCHS. The segment at 597 to 649 is disordered; the sequence is SFRVESSQTCHSEQGDKKMEEKNSGNFQKKAANMLQQSGSKNTGAKKRKIDDA. The span at 609–619 shows a compositional bias: basic and acidic residues; the sequence is EQGDKKMEEKN. The segment covering 630–639 has biased composition (polar residues); it reads MLQQSGSKNT. The residue at position 634 (S634) is a Phosphoserine. The segment covering 640–649 has biased composition (basic residues); that stretch reads GAKKRKIDDA.

It belongs to the helicase family. RecQ subfamily. In terms of assembly, may form homodimers or higher order oligomers. Interacts with EXO1. Interacts with MLH1. Interacts with PARP1. Mg(2+) serves as cofactor. The cofactor is Mn(2+). It depends on Zn(2+) as a cofactor.

It localises to the nucleus. The enzyme catalyses Couples ATP hydrolysis with the unwinding of duplex DNA by translocating in the 3'-5' direction.. It catalyses the reaction ATP + H2O = ADP + phosphate + H(+). The catalysed reaction is dATP + H2O = dADP + phosphate + H(+). Functionally, DNA helicase that plays a role in DNA damage repair and genome stability. Exhibits a magnesium- and ATP-dependent DNA-helicase activity that unwinds single- and double-stranded DNA in a 3'-5' direction. Plays a role in restoring regressed replication forks. Required to restart stalled replication forks induced by abortive topoisomerase 1 and 2 lesions. May play a role in the repair of DNA that is damaged by ultraviolet light or other mutagens. This Pongo abelii (Sumatran orangutan) protein is ATP-dependent DNA helicase Q1 (RECQL).